The primary structure comprises 386 residues: MHLHEYQAKDLLTAYQLPIPPYHVATSVPEVEAAIQAEQWKAGVVKAQVHAGGRGKNGGVVIAHSPEDLLAAADKLLHMQFSSNQTAGLSLPVNKVLISPLVEIASEYYLAIVIDRKHRCPVIMLSKAGGVDIEEVAEKQPDQLLKMTLPSSGKIYGYQLRRIAKFMEWDQPIADQGNRIIRQLLQCFYEKDASLLEINPLVLTKDGSLVILDAKMTIDDNALYRHPELADCYDPSQENIRDVLAKQLGLSYIALDGTIGCLVNGAGLAMSTLDILKLYGGSAANFLDVGGSASEKQIQEAISLVLSDKSVRVLFIHIFGGIMDCAVVASGLVSAMQGQKETIPTVIRLEGTNVDKGKGMIINAGIPCEFVTSMSEGAELAVQLSR.

Positions 9-244 (KDLLTAYQLP…PSQENIRDVL (236 aa)) constitute an ATP-grasp domain. Residues K46, 53–55 (GRG), V102, and E107 each bind ATP. The Mg(2+) site is built by N199 and D213. Substrate is bound by residues N264 and 321 to 323 (GIM).

Belongs to the succinate/malate CoA ligase beta subunit family. As to quaternary structure, heterotetramer of two alpha and two beta subunits. Mg(2+) serves as cofactor.

The catalysed reaction is succinate + ATP + CoA = succinyl-CoA + ADP + phosphate. It catalyses the reaction GTP + succinate + CoA = succinyl-CoA + GDP + phosphate. It functions in the pathway carbohydrate metabolism; tricarboxylic acid cycle; succinate from succinyl-CoA (ligase route): step 1/1. Its function is as follows. Succinyl-CoA synthetase functions in the citric acid cycle (TCA), coupling the hydrolysis of succinyl-CoA to the synthesis of either ATP or GTP and thus represents the only step of substrate-level phosphorylation in the TCA. The beta subunit provides nucleotide specificity of the enzyme and binds the substrate succinate, while the binding sites for coenzyme A and phosphate are found in the alpha subunit. The sequence is that of Succinate--CoA ligase [ADP-forming] subunit beta from Chlamydia trachomatis serovar L2 (strain ATCC VR-902B / DSM 19102 / 434/Bu).